The following is a 123-amino-acid chain: UPF0102 protein PputGB1_4524 (123 aa).

Belongs to the UPF0102 family.

This Pseudomonas putida (strain GB-1) protein is UPF0102 protein PputGB1_4524.